The sequence spans 476 residues: Hydrogenase-4 component F homolog (476 aa).

Helical transmembrane passes span 1-21 (MSAAAVILFPFIGILLLSQIS), 25-45 (ISSWLNTLFSFLSFVGSLFLL), 54-74 (FFLVDELNIVFILLTNFIGFT), 120-140 (IGLMWVSIEMATLSTVLMVGI), 153-173 (YFILGGVGIALALFGTFLFYI), 202-222 (LVNIGFIFILIGYGTKVGLFP), 235-255 (PTPISAVLSGLLLNVALYAIL), 270-290 (AGPLLTAMGLASVLFAALMFY), 307-327 (MGIISFAFGIGGALANFAGLL), 368-388 (LGWGLVFGVLAIAGLPPMGVF), 402-422 (SPLLAACLAVGLITALGALIL), and 442-462 (LYLPMFSHFLLVFAAGVYIPP).

This sequence belongs to the complex I subunit 5 family.

The protein resides in the cell inner membrane. This chain is Hydrogenase-4 component F homolog (hyfF), found in Methylacidiphilum infernorum (isolate V4) (Methylokorus infernorum (strain V4)).